We begin with the raw amino-acid sequence, 225 residues long: NAD(P)H-quinone oxidoreductase subunit K, chloroplastic (225 aa).

Residues Cys-43, Cys-44, Cys-108, and Cys-139 each contribute to the [4Fe-4S] cluster site.

It belongs to the complex I 20 kDa subunit family. NDH is composed of at least 16 different subunits, 5 of which are encoded in the nucleus. It depends on [4Fe-4S] cluster as a cofactor.

It localises to the plastid. The protein resides in the chloroplast thylakoid membrane. It catalyses the reaction a plastoquinone + NADH + (n+1) H(+)(in) = a plastoquinol + NAD(+) + n H(+)(out). The enzyme catalyses a plastoquinone + NADPH + (n+1) H(+)(in) = a plastoquinol + NADP(+) + n H(+)(out). In terms of biological role, NDH shuttles electrons from NAD(P)H:plastoquinone, via FMN and iron-sulfur (Fe-S) centers, to quinones in the photosynthetic chain and possibly in a chloroplast respiratory chain. The immediate electron acceptor for the enzyme in this species is believed to be plastoquinone. Couples the redox reaction to proton translocation, and thus conserves the redox energy in a proton gradient. This Gossypium barbadense (Sea Island cotton) protein is NAD(P)H-quinone oxidoreductase subunit K, chloroplastic.